We begin with the raw amino-acid sequence, 398 residues long: NADH-quinone oxidoreductase subunit D (398 aa).

The protein belongs to the complex I 49 kDa subunit family. NDH-1 is composed of 14 different subunits. Subunits NuoB, C, D, E, F, and G constitute the peripheral sector of the complex.

The protein resides in the cell inner membrane. It carries out the reaction a quinone + NADH + 5 H(+)(in) = a quinol + NAD(+) + 4 H(+)(out). In terms of biological role, NDH-1 shuttles electrons from NADH, via FMN and iron-sulfur (Fe-S) centers, to quinones in the respiratory chain. The immediate electron acceptor for the enzyme in this species is believed to be ubiquinone. Couples the redox reaction to proton translocation (for every two electrons transferred, four hydrogen ions are translocated across the cytoplasmic membrane), and thus conserves the redox energy in a proton gradient. In Anaplasma marginale (strain St. Maries), this protein is NADH-quinone oxidoreductase subunit D.